The sequence spans 68 residues: UPF0253 protein AHA_2115 (68 aa).

The protein belongs to the UPF0253 family.

This Aeromonas hydrophila subsp. hydrophila (strain ATCC 7966 / DSM 30187 / BCRC 13018 / CCUG 14551 / JCM 1027 / KCTC 2358 / NCIMB 9240 / NCTC 8049) protein is UPF0253 protein AHA_2115.